The chain runs to 160 residues: Large ribosomal subunit protein uL22c (160 aa).

Belongs to the universal ribosomal protein uL22 family. In terms of assembly, part of the 50S ribosomal subunit.

It localises to the plastid. The protein resides in the chloroplast. Functionally, this protein binds specifically to 23S rRNA. The globular domain of the protein is located near the polypeptide exit tunnel on the outside of the subunit, while an extended beta-hairpin is found that lines the wall of the exit tunnel in the center of the 70S ribosome. The chain is Large ribosomal subunit protein uL22c (rpl22) from Aethionema cordifolium (Lebanon stonecress).